The primary structure comprises 138 residues: 1,4-dihydroxy-2-naphthoyl-CoA hydrolase (138 aa).

The active site involves Asp-16.

Belongs to the 4-hydroxybenzoyl-CoA thioesterase family. DHNA-CoA hydrolase subfamily.

It carries out the reaction 1,4-dihydroxy-2-naphthoyl-CoA + H2O = 1,4-dihydroxy-2-naphthoate + CoA + H(+). It participates in cofactor biosynthesis; phylloquinone biosynthesis. Its pathway is quinol/quinone metabolism; 1,4-dihydroxy-2-naphthoate biosynthesis; 1,4-dihydroxy-2-naphthoate from chorismate: step 7/7. Catalyzes the specific hydrolysis of 1,4-dihydroxy-2-naphthoyl-CoA (DHNA-CoA) to 1,4-dihydroxy-2-naphthoate (DHNA), a reaction involved in phylloquinone (vitamin K1) biosynthesis. Is not active on benzoyl-CoA, phenylacetyl-CoA and aliphatic acyl-CoA thioesters. This is 1,4-dihydroxy-2-naphthoyl-CoA hydrolase from Synechocystis sp. (strain ATCC 27184 / PCC 6803 / Kazusa).